We begin with the raw amino-acid sequence, 674 residues long: Probable 3',5'-cyclic-AMP phosphodiesterase pde-4 (674 aa).

Residues 1 to 82 (MPRRRGSSSS…TSSASSYHPP (82 aa)) are disordered. Positions 15 to 24 (GGSGGGGGFG) are enriched in gly residues. Residues 39-62 (RTSSPSASSTSRTPPAALPPRTSA) are compositionally biased toward low complexity. Residues 66–78 (PGSNHKLTSSASS) are compositionally biased toward polar residues. Residues 328 to 660 (HVPEYGVNCA…EWYQSRIPEE (333 aa)) enclose the PDEase domain. H407 functions as the Proton donor in the catalytic mechanism. A divalent metal cation-binding residues include H411, H447, D448, and D565.

This sequence belongs to the cyclic nucleotide phosphodiesterase family. A divalent metal cation is required as a cofactor. As to expression, expressed in dorsal D (DD) motor neurons and several other neurons at the L1 stage. Expression in DD neurons decreases gradually beginning in the late L1 stage. Highly expressed in adult ventral D (VD) motor neurons, but diminished in adult DD motor neurons.

The catalysed reaction is 3',5'-cyclic AMP + H2O = AMP + H(+). Hydrolyzes the second messenger 3',5'-cyclic AMP (cAMP), which is a key regulator of many important physiological processes. Antagonizes dorsal D (DD) motor neuron respecification by reducing levels of cAMP. In Caenorhabditis elegans, this protein is Probable 3',5'-cyclic-AMP phosphodiesterase pde-4 (pde-4).